The primary structure comprises 906 residues: Probable dipeptidyl-aminopeptidase B (906 aa).

Over residues 1–11 (MRSSEDREDSE) the composition is skewed to acidic residues. The interval 1-33 (MRSSEDREDSELLPANRPRSPSRSSYDSDDSGL) is disordered. The Cytoplasmic segment spans residues 1–85 (MRSSEDREDS…TKASSSRSRR (85 aa)). Positions 21 to 33 (PSRSSYDSDDSGL) are enriched in low complexity. Residues 86-106 (LLWLVVLLCCGGWVVAFVLFI) form a helical; Signal-anchor for type II membrane protein membrane-spanning segment. At 107 to 906 (TQGRADYRTA…AKRVWPGFAH (800 aa)) the chain is on the vacuolar side. Asn-338 and Asn-629 each carry an N-linked (GlcNAc...) asparagine glycan. Catalysis depends on Ser-743, which acts as the Charge relay system. N-linked (GlcNAc...) asparagine glycosylation is present at Asn-797. Residues Asp-820 and His-853 each act as charge relay system in the active site.

It belongs to the peptidase S9B family.

It localises to the vacuole membrane. It carries out the reaction Release of an N-terminal dipeptide, Xaa-Yaa-|-Zaa-, from a polypeptide, preferentially when Yaa is Pro, provided Zaa is neither Pro nor hydroxyproline.. Functionally, type IV dipeptidyl-peptidase which removes N-terminal dipeptides sequentially from polypeptides having unsubstituted N-termini provided that the penultimate residue is proline. This is Probable dipeptidyl-aminopeptidase B (dapB) from Emericella nidulans (strain FGSC A4 / ATCC 38163 / CBS 112.46 / NRRL 194 / M139) (Aspergillus nidulans).